Consider the following 778-residue polypeptide: Probable glutamine--tRNA ligase (778 aa).

Residues 188-205 (LKPQTKANDKPKAAKPKA) show a composition bias toward basic and acidic residues. Residues 188-219 (LKPQTKANDKPKAAKPKAEVTPAAQTAEAASD) are disordered. The 'HIGH' region signature appears at 273–283 (PEPNGILHIGH). ATP is bound by residues 274–276 (EPN) and 280–286 (HIGHAKA). Residues Asp306 and Tyr441 each coordinate L-glutamine. ATP contacts are provided by residues Thr460, 489 to 490 (RL), and 497 to 499 (VSK). Positions 496–500 (LVSKR) match the 'KMSKS' region motif.

This sequence belongs to the class-I aminoacyl-tRNA synthetase family.

It catalyses the reaction tRNA(Gln) + L-glutamine + ATP = L-glutaminyl-tRNA(Gln) + AMP + diphosphate. The chain is Probable glutamine--tRNA ligase from Drosophila melanogaster (Fruit fly).